A 104-amino-acid chain; its full sequence is uncharacterized protein (104 aa).

It belongs to the BolA/IbaG family.

This is an uncharacterized protein from Buchnera aphidicola subsp. Acyrthosiphon pisum (strain APS) (Acyrthosiphon pisum symbiotic bacterium).